Consider the following 311-residue polypeptide: L-lactate dehydrogenase (311 aa).

Residues V12, D33, K38, Y63, and 77 to 78 (GA) contribute to the NAD(+) site. Substrate is bound by residues Q80 and R86. Residues S99, 116-118 (VTN), and S141 each bind NAD(+). 118–121 (NPVD) serves as a coordination point for substrate. 146-149 (DSSR) contributes to the substrate binding site. 2 residues coordinate beta-D-fructose 1,6-bisphosphate: R151 and H166. The Proton acceptor role is filled by H173. The residue at position 219 (Y219) is a Phosphotyrosine. T228 provides a ligand contact to substrate.

This sequence belongs to the LDH/MDH superfamily. LDH family. Homotetramer.

Its subcellular location is the cytoplasm. The enzyme catalyses (S)-lactate + NAD(+) = pyruvate + NADH + H(+). It participates in fermentation; pyruvate fermentation to lactate; (S)-lactate from pyruvate: step 1/1. Its activity is regulated as follows. Allosterically activated by fructose 1,6-bisphosphate (FBP). In terms of biological role, catalyzes the conversion of lactate to pyruvate. This Thermoanaerobacterium saccharolyticum (strain DSM 8691 / JW/SL-YS485) protein is L-lactate dehydrogenase.